The following is a 359-amino-acid chain: ATP-dependent 6-phosphofructokinase 1 (359 aa).

ATP contacts are provided by residues G14, 78–79 (KG), and 115–118 (GDGS). D116 provides a ligand contact to Mg(2+). Substrate is bound by residues 139 to 141 (TID), R176, 183 to 185 (MGR), E236, R277, and 283 to 286 (HIQR). D141 serves as the catalytic Proton acceptor.

The protein belongs to the phosphofructokinase type A (PFKA) family. Mixed-substrate PFK group III subfamily. In terms of assembly, homodimer or homotetramer. It depends on Mg(2+) as a cofactor.

It localises to the cytoplasm. It carries out the reaction beta-D-fructose 6-phosphate + ATP = beta-D-fructose 1,6-bisphosphate + ADP + H(+). Its pathway is carbohydrate degradation; glycolysis; D-glyceraldehyde 3-phosphate and glycerone phosphate from D-glucose: step 3/4. In terms of biological role, catalyzes the phosphorylation of D-fructose 6-phosphate to fructose 1,6-bisphosphate by ATP, the first committing step of glycolysis. The protein is ATP-dependent 6-phosphofructokinase 1 of Nostoc sp. (strain PCC 7120 / SAG 25.82 / UTEX 2576).